The sequence spans 142 residues: MGMMQEFREFAVKGNVVDLAVGVIIGGAFGKIVDSVVNDLIMPVVGLVFGKLDFSNLFVVLGSVPPGTAMTLDALKKAGVPVFAYGNFITVAVNFIILAFIIFMMVKQINRLRREAPAAPAPAPVTPEDIVLLREIRDSLKR.

Transmembrane regions (helical) follow at residues 10–30 (FAVK…GAFG), 40–60 (LIMP…LFVV), and 86–106 (GNFI…FMMV).

This sequence belongs to the MscL family. As to quaternary structure, homopentamer.

The protein resides in the cell inner membrane. In terms of biological role, channel that opens in response to stretch forces in the membrane lipid bilayer. May participate in the regulation of osmotic pressure changes within the cell. The chain is Large-conductance mechanosensitive channel from Delftia acidovorans (strain DSM 14801 / SPH-1).